Reading from the N-terminus, the 400-residue chain is Renin (400 aa).

Positions 1–17 (MPLWGLLLALWGCSTFS) are cleaved as a signal peptide. A propeptide spans 18-59 (LPADTAAFRRIFLKKMPSVRESLKERGVDMAQLGAEWSQLTK) (activation peptide). Asparagine 65 is a glycosylation site (N-linked (GlcNAc...) asparagine). Residues 80 to 397 (YYGEIGIGTP…DRRNNRIGFA (318 aa)) enclose the Peptidase A1 domain. The active site involves aspartate 98. Cysteine 111 and cysteine 118 are disulfide-bonded. Asparagine 135 is a glycosylation site (N-linked (GlcNAc...) asparagine). A disulfide bond links cysteine 277 and cysteine 281. The active site involves aspartate 286. Cysteine 320 and cysteine 356 form a disulfide bridge. An N-linked (GlcNAc...) asparagine glycan is attached at asparagine 353.

The protein belongs to the peptidase A1 family. Interacts with ATP6AP2. In terms of tissue distribution, kidney.

The protein resides in the secreted. It localises to the membrane. It carries out the reaction Cleavage of Leu-|-Xaa bond in angiotensinogen to generate angiotensin I.. Its activity is regulated as follows. Interaction with ATP6AP2 results in a 5-fold increased efficiency in angiotensinogen processing. In terms of biological role, renin is a highly specific endopeptidase, whose only known function is to generate angiotensin I from angiotensinogen in the plasma, initiating a cascade of reactions that produce an elevation of blood pressure and increased sodium retention by the kidney. This Ovis aries (Sheep) protein is Renin (REN).